The primary structure comprises 295 residues: Proline iminopeptidase (295 aa).

Residues 29-279 (PLLLLHGGPG…GCGHMPFVQE (251 aa)) form the AB hydrolase-1 domain. The Nucleophile role is filled by serine 107. The active site involves aspartate 246. The Proton donor role is filled by histidine 273.

It belongs to the peptidase S33 family.

It localises to the cell envelope. It catalyses the reaction Release of N-terminal proline from a peptide.. Its function is as follows. Releases the N-terminal proline from various substrates. The protein is Proline iminopeptidase of Lactobacillus delbrueckii subsp. bulgaricus (strain ATCC 11842 / DSM 20081 / BCRC 10696 / JCM 1002 / NBRC 13953 / NCIMB 11778 / NCTC 12712 / WDCM 00102 / Lb 14).